A 158-amino-acid chain; its full sequence is Small ribosomal subunit protein uS9 (158 aa).

It belongs to the universal ribosomal protein uS9 family.

The sequence is that of Small ribosomal subunit protein uS9 from Rhodopseudomonas palustris (strain HaA2).